Consider the following 1108-residue polypeptide: Ubiquitin carboxyl-terminal hydrolase 5 (1108 aa).

The region spanning 55–187 (FQRFTWHIKS…DGALLLTAYV (133 aa)) is the MATH domain. Catalysis depends on nucleophile residues C120 and C222. A USP domain is found at 213–528 (VGLKNQGATC…SAYMLLYLRK (316 aa)). The Proton acceptor role is filled by H464.

This sequence belongs to the peptidase C19 family.

It is found in the nucleus. It catalyses the reaction Thiol-dependent hydrolysis of ester, thioester, amide, peptide and isopeptide bonds formed by the C-terminal Gly of ubiquitin (a 76-residue protein attached to proteins as an intracellular targeting signal).. Its function is as follows. Hydrolase that deubiquitinates target proteins. Cleaves the UBL propeptide in sde2. In Schizosaccharomyces pombe (strain 972 / ATCC 24843) (Fission yeast), this protein is Ubiquitin carboxyl-terminal hydrolase 5 (ubp5).